We begin with the raw amino-acid sequence, 294 residues long: UDP-3-O-acyl-N-acetylglucosamine deacetylase (294 aa).

Zn(2+) is bound by residues histidine 75, histidine 232, and aspartate 236. The active-site Proton donor is the histidine 259.

Belongs to the LpxC family. It depends on Zn(2+) as a cofactor.

The enzyme catalyses a UDP-3-O-[(3R)-3-hydroxyacyl]-N-acetyl-alpha-D-glucosamine + H2O = a UDP-3-O-[(3R)-3-hydroxyacyl]-alpha-D-glucosamine + acetate. It participates in glycolipid biosynthesis; lipid IV(A) biosynthesis; lipid IV(A) from (3R)-3-hydroxytetradecanoyl-[acyl-carrier-protein] and UDP-N-acetyl-alpha-D-glucosamine: step 2/6. In terms of biological role, catalyzes the hydrolysis of UDP-3-O-myristoyl-N-acetylglucosamine to form UDP-3-O-myristoylglucosamine and acetate, the committed step in lipid A biosynthesis. The protein is UDP-3-O-acyl-N-acetylglucosamine deacetylase of Sulfurimonas denitrificans (strain ATCC 33889 / DSM 1251) (Thiomicrospira denitrificans (strain ATCC 33889 / DSM 1251)).